A 172-amino-acid polypeptide reads, in one-letter code: Small ribosomal subunit protein uS5 (172 aa).

Residues 16–79 enclose the S5 DRBM domain; sequence LKDRLVAINR…ESAKKNLTRV (64 aa).

This sequence belongs to the universal ribosomal protein uS5 family. As to quaternary structure, part of the 30S ribosomal subunit. Contacts proteins S4 and S8.

Functionally, with S4 and S12 plays an important role in translational accuracy. Its function is as follows. Located at the back of the 30S subunit body where it stabilizes the conformation of the head with respect to the body. The sequence is that of Small ribosomal subunit protein uS5 from Bacteroides fragilis (strain ATCC 25285 / DSM 2151 / CCUG 4856 / JCM 11019 / LMG 10263 / NCTC 9343 / Onslow / VPI 2553 / EN-2).